A 1018-amino-acid chain; its full sequence is Serine/threonine-protein phosphatase BSL2 (1018 aa).

The disordered stretch occupies residues 1-75; it reads MDEDSSMVAD…AAAVVGQEQQ (75 aa). The span at 41 to 57 shows a compositional bias: pro residues; sequence SPPPEGGSVPTPPPSDP. Low complexity predominate over residues 63-75; sequence QQQAAAVVGQEQQ. Kelch repeat units follow at residues 149-195, 253-301, 306-356, 362-409, and 430-479; these read TSAG…VATA, YLMA…TASA, LLLL…VFVN, SGGA…DAAG, and LIFI…RLPG. The disordered stretch occupies residues 569–590; sequence DRDCGAEATPSGKPTFSLIKPD. Position 627 is a phosphoserine (S627). Mn(2+) contacts are provided by D720, H722, D754, and N786. H787 (proton donor) is an active-site residue. Residues H839 and H918 each contribute to the Mn(2+) site. Phosphoserine is present on S975. Over residues 994-1011 the composition is skewed to polar residues; it reads ANRPATPTRGRPQNSNDR. Residues 994–1018 form a disordered region; the sequence is ANRPATPTRGRPQNSNDRGGSLAWM.

Belongs to the PPP phosphatase family. BSU subfamily. In terms of assembly, interacts with BSK8. Requires Mn(2+) as cofactor. As to expression, expressed throughout the plant, with a higher level in younger parts.

It localises to the cytoplasm. The protein localises to the cell membrane. The protein resides in the nucleus. The catalysed reaction is O-phospho-L-seryl-[protein] + H2O = L-seryl-[protein] + phosphate. The enzyme catalyses O-phospho-L-threonyl-[protein] + H2O = L-threonyl-[protein] + phosphate. Phosphatase involved in elongation process, probably by acting as a regulator of brassinolide signaling. This Arabidopsis thaliana (Mouse-ear cress) protein is Serine/threonine-protein phosphatase BSL2 (BSL2).